Reading from the N-terminus, the 449-residue chain is Phosphomethylpyrimidine synthase (449 aa).

Residues asparagine 80, methionine 109, tyrosine 138, histidine 173, 193-195 (SRG), 234-237 (DSLR), and glutamate 273 each bind substrate. Histidine 277 serves as a coordination point for Zn(2+). Tyrosine 300 lines the substrate pocket. Histidine 341 contributes to the Zn(2+) binding site. 3 residues coordinate [4Fe-4S] cluster: cysteine 421, cysteine 424, and cysteine 429.

Belongs to the ThiC family. In terms of assembly, homodimer. It depends on [4Fe-4S] cluster as a cofactor.

The catalysed reaction is 5-amino-1-(5-phospho-beta-D-ribosyl)imidazole + S-adenosyl-L-methionine = 4-amino-2-methyl-5-(phosphooxymethyl)pyrimidine + CO + 5'-deoxyadenosine + formate + L-methionine + 3 H(+). It functions in the pathway cofactor biosynthesis; thiamine diphosphate biosynthesis. Catalyzes the synthesis of the hydroxymethylpyrimidine phosphate (HMP-P) moiety of thiamine from aminoimidazole ribotide (AIR) in a radical S-adenosyl-L-methionine (SAM)-dependent reaction. This chain is Phosphomethylpyrimidine synthase, found in Campylobacter hominis (strain ATCC BAA-381 / DSM 21671 / CCUG 45161 / LMG 19568 / NCTC 13146 / CH001A).